Consider the following 515-residue polypeptide: Glucose-6-phosphate 1-dehydrogenase (515 aa).

At Ala2 the chain carries N-acetylalanine. Ser8 carries the post-translational modification Phosphoserine. Thr10 carries the post-translational modification Phosphothreonine. 38 to 45 (GASGDLAK) is an NADP(+) binding site. Residue Lys89 is modified to N6-acetyllysine. Residues Tyr147 and Lys171 each contribute to the NADP(+) site. D-glucose 6-phosphate is bound by residues Lys171, 201 to 205 (HYLGK), Glu239, and Glu258. At Lys171 the chain carries N6-(2-hydroxyisobutyryl)lysine; alternate. Lys171 bears the N6-acetyllysine; alternate mark. Arg357 contributes to the NADP(+) binding site. Residues Lys360 and Arg365 each contribute to the D-glucose 6-phosphate site. NADP(+) contacts are provided by Lys366, Arg370, and Arg393. Gln395 is a D-glucose 6-phosphate binding site. NADP(+)-binding positions include 401-403 (YTK) and 421-423 (DLT). At Lys403 the chain carries N6-acetyllysine. At Lys432 the chain carries N6-acetyllysine. Arg487 contacts NADP(+). Lys497 bears the N6-acetyllysine mark. NADP(+)-binding residues include Tyr503 and Trp509. Residue Tyr503 is modified to Phosphotyrosine.

This sequence belongs to the glucose-6-phosphate dehydrogenase family. As to quaternary structure, homotetramer; dimer of dimers. Interacts with SIRT2; the interaction is enhanced by H(2)O(2) treatment. Forms a ternary complex with ALDOB and TP53; this interaction is direct. ALDOB stabilizes the complex inhibiting G6PD activity and keeping oxidative pentose phosphate metabolism in check. Post-translationally, acetylated by ELP3 at Lys-403; acetylation inhibits its homodimerization and enzyme activity. Deacetylated by SIRT2 at Lys-403; deacetylation stimulates its enzyme activity.

The protein localises to the cytoplasm. It localises to the cytosol. It is found in the membrane. The catalysed reaction is D-glucose 6-phosphate + NADP(+) = 6-phospho-D-glucono-1,5-lactone + NADPH + H(+). It functions in the pathway carbohydrate degradation; pentose phosphate pathway; D-ribulose 5-phosphate from D-glucose 6-phosphate (oxidative stage): step 1/3. Functionally, cytosolic glucose-6-phosphate dehydrogenase that catalyzes the first and rate-limiting step of the oxidative branch within the pentose phosphate pathway/shunt, an alternative route to glycolysis for the dissimilation of carbohydrates and a major source of reducing power and metabolic intermediates for fatty acid and nucleic acid biosynthetic processes. The polypeptide is Glucose-6-phosphate 1-dehydrogenase (G6PD) (Bos indicus (Zebu)).